Here is a 398-residue protein sequence, read N- to C-terminus: Homeobox protein knotted-1-like 1 (398 aa).

3 disordered regions span residues 43 to 69, 172 to 192, and 234 to 277; these read TFHL…PGTH, EFEA…DPEL, and NNNA…PRAE. Over residues 49 to 58 the composition is skewed to gly residues; the sequence is SGGGGGGGSG. One can recognise an ELK domain in the interval 280–300; sequence ELKNHLLRKYSGYLSSLKQEL. Positions 301 to 364 form a DNA-binding region, homeobox; TALE-type; it reads SKKKKKGKLP…NQRKRHWKPS (64 aa).

This sequence belongs to the TALE/KNOX homeobox family. Expressed only in the stems.

It is found in the nucleus. Probably binds to the DNA sequence 5'-TGAC-3'. The chain is Homeobox protein knotted-1-like 1 from Malus domestica (Apple).